Consider the following 371-residue polypeptide: Opine oxidase subunit B (371 aa).

In terms of assembly, heterodimer of a subunit A and a subunit B.

It functions in the pathway opine metabolism; octopine degradation. Functionally, oxidative cleavage of octopine into L-arginine and pyruvate. The chain is Opine oxidase subunit B (ooxB) from Rhizobium meliloti (Ensifer meliloti).